Reading from the N-terminus, the 238-residue chain is Large ribosomal subunit protein uL2 (238 aa).

A disordered region spans residues 198–238 (NHPHGGGSHQSPSFPTTVSRNAPPGRKVGHIAARSTGRRKR). The segment covering 206–217 (HQSPSFPTTVSR) has biased composition (polar residues).

The protein belongs to the universal ribosomal protein uL2 family. As to quaternary structure, part of the 50S ribosomal subunit. Forms a bridge to the 30S subunit in the 70S ribosome.

One of the primary rRNA binding proteins. Required for association of the 30S and 50S subunits to form the 70S ribosome, for tRNA binding and peptide bond formation. It has been suggested to have peptidyltransferase activity; this is somewhat controversial. Makes several contacts with the 16S rRNA in the 70S ribosome. The polypeptide is Large ribosomal subunit protein uL2 (Hyperthermus butylicus (strain DSM 5456 / JCM 9403 / PLM1-5)).